Consider the following 388-residue polypeptide: N-acetylneuraminate epimerase (388 aa).

A signal peptide spans 1–26 (MFSLIRAKRLAIGIAALAWSTGAVMA). Kelch repeat units lie at residues 48–92 (MAYV…AAAG), 94–147 (KIFA…VGLA), 149–186 (GRIA…KLVD), 187–232 (SYMG…ATMG), 236–285 (FLLV…VAGA), 307–356 (ANAA…DAPG), and 358–387 (LLVV…LSVE). Residue Glu-242 is the Proton acceptor of the active site.

The protein belongs to the NanM family. Homodimer.

The protein localises to the periplasm. It catalyses the reaction N-acetyl-alpha-neuraminate = N-acetyl-beta-neuraminate. Functionally, converts alpha-N-acetylneuranimic acid (Neu5Ac) to the beta-anomer, accelerating the equilibrium between the alpha- and beta-anomers. Probably facilitates sialidase-negative bacteria to compete successfully for limited amounts of extracellular Neu5Ac, which is likely taken up in the beta-anomer. In addition, the rapid removal of sialic acid from solution might be advantageous to the bacterium to damp down host responses. The chain is N-acetylneuraminate epimerase from Brucella melitensis biotype 1 (strain ATCC 23456 / CCUG 17765 / NCTC 10094 / 16M).